The sequence spans 571 residues: uncharacterized protein (571 aa).

Transmembrane regions (helical) follow at residues V10–G29, V36–F55, W65–L87, A96–F118, and A166–L188. The 85-residue stretch at T294–F378 folds into the RCK C-terminal domain. 6 helical membrane-spanning segments follow: residues L388–V406, V411–S433, L446–A465, L480–L502, L509–L531, and V546–A568.

Belongs to the AAE transporter (TC 2.A.81) family.

The protein resides in the cell membrane. This is an uncharacterized protein from Bordetella bronchiseptica (strain ATCC BAA-588 / NCTC 13252 / RB50) (Alcaligenes bronchisepticus).